Reading from the N-terminus, the 538-residue chain is indole-2-monooxygenase (538 aa).

Residues 22-42 (ALLLAIPFSLLLLPLLLRYLA) form a helical membrane-spanning segment. Residue Cys-481 participates in heme binding.

The protein belongs to the cytochrome P450 family. Heme is required as a cofactor.

The protein resides in the membrane. The catalysed reaction is indole + reduced [NADPH--hemoprotein reductase] + O2 = indolin-2-one + oxidized [NADPH--hemoprotein reductase] + H2O + H(+). It functions in the pathway secondary metabolite biosynthesis; 2,4-dihydroxy-1,4-benzoxazin-3-one biosynthesis; 2,4-dihydroxy-1,4-benzoxazin-3-one from indoleglycerol phosphate: step 2/5. Functionally, catalyzes the conversion of indole to indolin-2-one. This is indole-2-monooxygenase (CYP71C4) from Zea mays (Maize).